Reading from the N-terminus, the 530-residue chain is NMDA receptor synaptonuclear signaling and neuronal migration factor (530 aa).

Glycine 2 carries N-myristoyl glycine lipidation. The interval 2–233 is necessary and sufficient to elicit dendritic processes and synaptic contacts; sequence GAAASRRRAL…FSFQTATTTM (232 aa). Disordered stretches follow at residues 34-67 and 125-197; these read SQSH…APQN and KGRR…GRRK. A compositionally biased stretch (basic and acidic residues) spans 38–48; that stretch reads PENRNGADHLL. Basic residues predominate over residues 125–137; it reads KGRRQRHPHHHSQ. Over residues 153–162 the composition is skewed to polar residues; it reads PCQSWAGSRQ. Residue serine 204 is modified to Phosphoserine. The Nuclear localization signal signature appears at 247-250; sequence RRKR. A disordered region spans residues 285-312; it reads RSFSRSWSDPTPMKADTSHDSRDSSDLQ. Residues serine 290 and serine 292 each carry the phosphoserine modification. The segment covering 300-309 has biased composition (basic and acidic residues); sequence DTSHDSRDSS.

The protein belongs to the NSMF family. As to quaternary structure, interacts with KPNA1; the interaction occurs in a calcium-independent manner after synaptic NMDA receptor stimulation and is required for nuclear import of NSMF but is competed by CABP1. Interacts (via the central NLS-containing motif region) with CABP1 (via EF-hands 1 and 2); the interaction occurs in a calcium-dependent manner after synaptic NMDA receptor stimulation and prevents the nuclear import of NSMF. Cannot be competed by calmodulin. Post-translationally, proteolytically processed after NMDA receptor activation. Cleaved in a calcium-dependent and calpain-sensitive manner. Calpain cleavage is essential for the translocation process from dendrites to the nucleus. Highly expressed in adult and fetal brain. Weakly expressed in heart, liver, spleen, testis, small intestine, skeletal muscle, peripheral white blood cells and kidney.

It is found in the nucleus. The protein localises to the nucleus envelope. It localises to the nucleus membrane. Its subcellular location is the nucleus matrix. The protein resides in the cytoplasm. It is found in the cell cortex. The protein localises to the cytoskeleton. It localises to the cell membrane. Its subcellular location is the cell projection. The protein resides in the dendrite. It is found in the synapse. The protein localises to the synaptosome. It localises to the postsynaptic density. Its subcellular location is the membrane. Its function is as follows. Couples NMDA-sensitive glutamate receptor signaling to the nucleus and triggers long-lasting changes in the cytoarchitecture of dendrites and spine synapse processes. Part of the cAMP response element-binding protein (CREB) shut-off signaling pathway. Stimulates outgrowth of olfactory axons and migration of gonadotropin-releasing hormone (GnRH) and luteinizing-hormone-releasing hormone (LHRH) neuronal cells. This chain is NMDA receptor synaptonuclear signaling and neuronal migration factor (NSMF), found in Homo sapiens (Human).